We begin with the raw amino-acid sequence, 2873 residues long: WD repeat-containing protein 87 (2873 aa).

7 WD repeats span residues Pro-108–Gln-146, Thr-199–Ser-239, Ala-242–Glu-283, Ser-368–Lys-407, Asn-415–Lys-460, Leu-516–Ser-553, and Leu-565–Leu-604. Disordered regions lie at residues Phe-1049 to Thr-1124, Asp-1177 to Ala-1199, Glu-1392 to Val-1413, Ser-1531 to Arg-1607, and Lys-2199 to Asp-2338. Composition is skewed to basic residues over residues Val-1089–Lys-1101 and Lys-1187–Lys-1197. A compositionally biased stretch (basic and acidic residues) spans Glu-1549–Trp-1574. Residues Ala-1575–Lys-1586 show a composition bias toward basic residues. 2 stretches are compositionally biased toward basic and acidic residues: residues Lys-1587–Arg-1607 and Lys-2204–Phe-2213. Positions Ser-2244–Glu-2276 are enriched in acidic residues. Residues Glu-2277–Lys-2287 show a composition bias toward basic and acidic residues. Over residues Glu-2304–Val-2337 the composition is skewed to acidic residues.

In Homo sapiens (Human), this protein is WD repeat-containing protein 87 (WDR87).